A 146-amino-acid chain; its full sequence is NADPH-dependent 7-cyano-7-deazaguanine reductase (146 aa).

Catalysis depends on Cys-48, which acts as the Thioimide intermediate. Catalysis depends on Asp-55, which acts as the Proton donor. Residues 70–72 (VES) and 89–90 (HE) contribute to the substrate site.

It belongs to the GTP cyclohydrolase I family. QueF type 1 subfamily.

The protein localises to the cytoplasm. The catalysed reaction is 7-aminomethyl-7-carbaguanine + 2 NADP(+) = 7-cyano-7-deazaguanine + 2 NADPH + 3 H(+). The protein operates within tRNA modification; tRNA-queuosine biosynthesis. Functionally, catalyzes the NADPH-dependent reduction of 7-cyano-7-deazaguanine (preQ0) to 7-aminomethyl-7-deazaguanine (preQ1). The sequence is that of NADPH-dependent 7-cyano-7-deazaguanine reductase from Helicobacter pylori (strain Shi470).